The following is a 340-amino-acid chain: MKKAVVLLNLGGPDSLSAVRPFLFNLFYDKRIINLPNPFRFFLAKFISAKRENNARKIYEQIGGKSPILENTKMQAEALERELNRSVFCHPSSVTLGPRKENWIPVSRIGMTSKLTKVFICMRYWHPFANEVVKSVKQFDPDEVILLPLYPQYSTTTTLSSIENWQKNAKQYGIKCNTKIIRHHYDNQDFIEAHANLITKHYKLASEVGKPRVLFSAHSLPLSVIKKGDPYALQVEETVKLIVKKLHIKDLDWSICYQSKIGPVKWLEPSTESELLRAKADGVPVVLLPISFVSEHSETLVELDMEYKTIIKDGYYFRIPTLSTNSLFIKCLAGLCINHS.

Fe cation is bound by residues His218 and Glu298.

The protein belongs to the ferrochelatase family.

Its subcellular location is the cytoplasm. It catalyses the reaction heme b + 2 H(+) = protoporphyrin IX + Fe(2+). It participates in porphyrin-containing compound metabolism; protoheme biosynthesis; protoheme from protoporphyrin-IX: step 1/1. Functionally, catalyzes the ferrous insertion into protoporphyrin IX. The sequence is that of Ferrochelatase from Wolbachia sp. subsp. Brugia malayi (strain TRS).